A 440-amino-acid polypeptide reads, in one-letter code: Beta-1,3-galactosyl-O-glycosyl-glycoprotein beta-1,6-N-acetylglucosaminyltransferase 3 (440 aa).

The Cytoplasmic segment spans residues 1–12 (MKMTGWKKKLCR). Residues 13-30 (GHHLWALGCYMLLAVVAL) form a helical; Signal-anchor for type II membrane protein membrane-spanning segment. Topologically, residues 31-440 (RLSLRLKCDV…RHKAIYGTEL (410 aa)) are lumenal. Intrachain disulfides connect Cys73–Cys230, Cys164–Cys384, Cys185–Cys212, and Cys393–Cys425. Residue Asn108 is glycosylated (N-linked (GlcNAc...) asparagine).

Belongs to the glycosyltransferase 14 family. N-glycosylated.

The protein resides in the golgi apparatus membrane. The enzyme catalyses a 3-O-[beta-D-galactosyl-(1-&gt;3)-N-acetyl-alpha-D-galactosaminyl]-L-seryl-[protein] + UDP-N-acetyl-alpha-D-glucosamine = 3-O-{beta-D-galactosyl-(1-&gt;3)-[N-acetyl-beta-D-glucosaminyl-(1-&gt;6)]-N-acetyl-alpha-D-galactosaminyl}-L-seryl-[protein] + UDP + H(+). It carries out the reaction a 3-O-[beta-D-galactosyl-(1-&gt;3)-N-acetyl-alpha-D-galactosaminyl]-L-threonyl-[protein] + UDP-N-acetyl-alpha-D-glucosamine = a 3-O-{beta-D-galactosyl-(1-&gt;3)-[N-acetyl-beta-D-glucosaminyl-(1-&gt;6)]-N-acetyl-alpha-D-galactosaminyl}-L-threonyl-[protein] + UDP + H(+). It catalyses the reaction a beta-D-Gal-(1-&gt;4)-beta-D-GlcNAc-(1-&gt;3)-beta-D-Gal-(1-&gt;4)-beta-D-GlcNAc derivative + UDP-N-acetyl-alpha-D-glucosamine = a beta-D-Gal-(1-&gt;4)-beta-D-GlcNAc-(1-&gt;3)-[beta-D-GlcNAc-(1-&gt;6)]-beta-D-Gal-(1-&gt;4)-N-acetyl-beta-D-glucosaminyl derivative + UDP + H(+). The catalysed reaction is 3-O-[N-acetyl-beta-D-glucosaminyl-(1-&gt;3)-N-acetyl-alpha-D-galactosaminyl]-L-seryl-[protein] + UDP-N-acetyl-alpha-D-glucosamine = 3-O-[N-acetyl-beta-D-glucosaminyl-(1-&gt;3)-[N-acetyl-beta-D-glucosaminyl-(1-&gt;6)]-N-acetyl-alpha-D-galactosaminyl]-L-seryl-[protein] + UDP + H(+). The enzyme catalyses a 3-O-[N-acetyl-beta-D-glucosaminyl-(1-&gt;3)-N-acetyl-alpha-D-galactosaminyl]-L-threonyl-[protein] + UDP-N-acetyl-alpha-D-glucosamine = 3-O-[N-acetyl-beta-D-glucosaminyl-(1-&gt;3)-[N-acetyl-beta-D-glucosaminyl-(1-&gt;6)]-N-acetyl-alpha-D-galactosaminyl]-L-threonyl-[protein] + UDP + H(+). Its pathway is protein modification; protein glycosylation. Its function is as follows. Glycosyltransferase that can synthesize all known mucin beta 6 N-acetylglucosaminides. Mediates core 2 and core 4 O-glycan branching, 2 important steps in mucin-type biosynthesis. Also has I-branching enzyme activity by converting linear into branched poly-N-acetyllactosaminoglycans, leading to introduce the blood group I antigen during embryonic development. The chain is Beta-1,3-galactosyl-O-glycosyl-glycoprotein beta-1,6-N-acetylglucosaminyltransferase 3 (GCNT3) from Ovis aries (Sheep).